The sequence spans 510 residues: Secreted RxLR effector protein 24 (510 aa).

The N-terminal stretch at 1–18 is a signal peptide; it reads MRGAFYVAIALLGSHTAA. Positions 47-68 match the RxLR-dEER motif; that stretch reads RVLRERRDSKDKLTVHAGAEER.

Belongs to the RxLR effector family.

The protein localises to the secreted. Its subcellular location is the host nucleus. Secreted effector that acts as an elicitor that induces cell death in host plant cells. This Plasmopara viticola (Downy mildew of grapevine) protein is Secreted RxLR effector protein 24.